The sequence spans 102 residues: Thioredoxin (102 aa).

A Thioredoxin domain is found at 1–102 (MVKIISSENF…FLTNLINKHA (102 aa)). Cysteines 28 and 31 form a disulfide.

Belongs to the thioredoxin family.

Functionally, participates in various redox reactions through the reversible oxidation of its active center dithiol to a disulfide and catalyzes dithiol-disulfide exchange reactions. This chain is Thioredoxin (trxA), found in Chlamydia pneumoniae (Chlamydophila pneumoniae).